The sequence spans 61 residues: Small ribosomal subunit protein uS14 (61 aa).

Zn(2+) contacts are provided by Cys-24, Cys-27, Cys-40, and Cys-43.

It belongs to the universal ribosomal protein uS14 family. Zinc-binding uS14 subfamily. As to quaternary structure, part of the 30S ribosomal subunit. Contacts proteins S3 and S10. Zn(2+) serves as cofactor.

Its function is as follows. Binds 16S rRNA, required for the assembly of 30S particles and may also be responsible for determining the conformation of the 16S rRNA at the A site. The chain is Small ribosomal subunit protein uS14 from Mycoplasma mobile (strain ATCC 43663 / 163K / NCTC 11711) (Mesomycoplasma mobile).